The chain runs to 503 residues: MVLVLDFGSQYTRLIARRLRELRAFSLILPGDAPLEEVLKHRPQALILSGGPRSVFDPDAPRPDPRLFSSGLPLLGICYGMQLLAQELGGRVERAGRAEYGKALLTRHEGPLFRGLEGEVQVWMSHQDAVTAPPPGWRVVAETEENPVAAIASPDGRAYGVQFHPEVAHTPKGMQILENFLELAGVKRDWTPEHVLEELLREVRERAGKDRVLLAVSGGVDSSTLALLLAKAGVDHLAVFVDHGLLRLGEREEVEGALRALGVNLLVVDAKERFLKALKGVEDPEEKRKIIGREFVAAFSQVARERGPFRFLAQGTLYPDVIESAGGHGAAKIKSHHNVGGLPEDLEFELLEPFRLLFKDEVRELALLLGLPDTLRLRHPFPGPGLAVRVLGEVTEERLEILRRADDIFTSLLREWGLYEKVAQALAVLTPVRSVGVAGDERKYGYVLALRAVTTEDFMTADWARLPLEFLDEAARRITRRVPEIGRVVYDLTSKPPATIEWE.

Positions 1-189 (MVLVLDFGSQ…FLELAGVKRD (189 aa)) constitute a Glutamine amidotransferase type-1 domain. Catalysis depends on Cys-78, which acts as the Nucleophile. Catalysis depends on residues His-164 and Glu-166. A GMPS ATP-PPase domain is found at 190-378 (WTPEHVLEEL…LGLPDTLRLR (189 aa)). Residue 217–223 (SGGVDSS) participates in ATP binding.

In terms of assembly, homodimer.

It catalyses the reaction XMP + L-glutamine + ATP + H2O = GMP + L-glutamate + AMP + diphosphate + 2 H(+). The protein operates within purine metabolism; GMP biosynthesis; GMP from XMP (L-Gln route): step 1/1. Catalyzes the synthesis of GMP from XMP. This Thermus thermophilus (strain ATCC 27634 / DSM 579 / HB8) protein is GMP synthase [glutamine-hydrolyzing].